The primary structure comprises 175 residues: MADPARARRLAKRITTIVASAIEYEIKDPGLVGVTITDAKVTADLHDATVYYTVMGPTLDDEPDYAAAAAALERAKGVLRTKVGAGTGVRFTPTLTFTRDVTSDTVHRMDELLARARAADADLARVRVGAKPAGEADPYRDRGSADEPSDAGGLVIRTSDGLEAENTGDDYQAED.

A disordered region spans residues 129–175 (GAKPAGEADPYRDRGSADEPSDAGGLVIRTSDGLEAENTGDDYQAED). Residues 162–175 (LEAENTGDDYQAED) are compositionally biased toward acidic residues.

It belongs to the RbfA family. As to quaternary structure, monomer. Binds 30S ribosomal subunits, but not 50S ribosomal subunits or 70S ribosomes.

The protein resides in the cytoplasm. Its function is as follows. One of several proteins that assist in the late maturation steps of the functional core of the 30S ribosomal subunit. Associates with free 30S ribosomal subunits (but not with 30S subunits that are part of 70S ribosomes or polysomes). Required for efficient processing of 16S rRNA. May interact with the 5'-terminal helix region of 16S rRNA. This Mycobacterium marinum (strain ATCC BAA-535 / M) protein is Ribosome-binding factor A.